We begin with the raw amino-acid sequence, 1218 residues long: Protein dispatched (1218 aa).

A helical transmembrane segment spans residues 21–41 (YLVVVSIAVYCVACIIVALVL). Residues 99-135 (VETKLHPNHRRRKNKHKNRNKNKRRKEQNQSSHEHHD) are disordered. A compositionally biased stretch (basic residues) spans 104–124 (HPNHRRRKNKHKNRNKNKRRK). N-linked (GlcNAc...) asparagine glycans are attached at residues Asn127, Asn176, Asn197, Asn264, Asn319, and Asn388. Residues 430-624 (AMDLGLENEL…ITWLPASVSI (195 aa)) form the SSD domain. A run of 6 helical transmembrane segments spans residues 443–463 (LLLT…ASVW), 473–493 (LMSC…YAIV), 504–524 (LLAV…FLKI), 570–590 (AAAS…ASYS), 598–618 (CFGI…ITWL), and 670–690 (AYLW…IVFW). Residues Asn767, Asn883, and Asn891 are each glycosylated (N-linked (GlcNAc...) asparagine). The next 5 membrane-spanning stretches (helical) occupy residues 975–995 (LAVL…VLTV), 996–1016 (SLSI…LNIL), 1019–1039 (IAVS…GIHY), 1058–1078 (IIGP…IMMA), and 1087–1107 (IGVF…FFLM).

Belongs to the dispatched family.

The protein localises to the membrane. Functionally, segment polarity protein which functions in hedgehog (Hh) signaling. Regulates the trafficking and the release of cholesterol-modified hedgehog protein from cells of the posterior compartment (P cells) and is hence required for the effective production of the Hh signal. The sequence is that of Protein dispatched (disp) from Drosophila melanogaster (Fruit fly).